The sequence spans 527 residues: UDP-glucuronosyltransferase 2A1 (527 aa).

The first 20 residues, 1 to 20 (MLNNLLLFSLQISLIGTTLG), serve as a signal peptide directing secretion. Over 21 to 491 (GNVLIWPMEG…TWFQYHSLDV (471 aa)) the chain is Lumenal. N-linked (GlcNAc...) asparagine glycosylation is found at Asn49, Leu313, and Asn347. Residues 492-512 (IGFLLVCVTTAIFLVIQCCLF) traverse the membrane as a helical segment. The Cytoplasmic segment spans residues 513–527 (SCQKFGKIGKKKKRE).

The protein belongs to the UDP-glycosyltransferase family. As to expression, olfactory epithelium, brain and fetal lung. Not present in liver.

Its subcellular location is the membrane. It is found in the endoplasmic reticulum membrane. It carries out the reaction glucuronate acceptor + UDP-alpha-D-glucuronate = acceptor beta-D-glucuronoside + UDP + H(+). The catalysed reaction is 16beta,17beta-estriol + UDP-alpha-D-glucuronate = 16beta,17beta-estriol 16-O-(beta-D-glucuronate) + UDP + H(+). The enzyme catalyses 16alpha,17alpha-estriol + UDP-alpha-D-glucuronate = 16alpha,17alpha-estriol 16-O-(beta-D-glucuronate) + UDP + H(+). It catalyses the reaction 17alpha-estradiol + UDP-alpha-D-glucuronate = 17alpha-estradiol 17-O-(beta-D-glucuronate) + UDP + H(+). It carries out the reaction 17alpha-estradiol + UDP-alpha-D-glucuronate = 17alpha-estradiol 3-O-(beta-D-glucuronate) + UDP + H(+). The catalysed reaction is 17beta-estradiol + UDP-alpha-D-glucuronate = 17beta-estradiol 3-O-(beta-D-glucuronate) + UDP + H(+). The enzyme catalyses 17beta-estradiol + UDP-alpha-D-glucuronate = 17beta-estradiol 17-O-(beta-D-glucuronate) + UDP + H(+). It catalyses the reaction testosterone + UDP-alpha-D-glucuronate = testosterone 17-O-(beta-D-glucuronate) + UDP + H(+). It carries out the reaction epitestosterone + UDP-alpha-D-glucuronate = epitestosterone 17-O-(beta-D-glucuronate) + UDP + H(+). The catalysed reaction is lithocholate + UDP-alpha-D-glucuronate = lithocholoyl-3-O-(beta-D-glucuronate) + UDP + H(+). The enzyme catalyses lithocholate + UDP-alpha-D-glucuronate = lithocholoyl-24-O-(beta-D-glucuronate) + UDP. It catalyses the reaction deoxycholate + UDP-alpha-D-glucuronate = deoxycholoyl-24-O-(beta-D-glucuronate) + UDP. It carries out the reaction hyodeoxycholate + UDP-alpha-D-glucuronate = hyodeoxycholoyl-24-O-(beta-D-glucuronate) + UDP. The catalysed reaction is hyocholate + UDP-alpha-D-glucuronate = hyocholoyl-24-O-(beta-D-glucuronate) + UDP. Functionally, UDP-glucuronosyltransferase (UGT) that catalyzes phase II biotransformation reactions in which lipophilic substrates are conjugated with glucuronic acid to increase the metabolite's water solubility, thereby facilitating excretion into either the urine or bile. Essential for the elimination and detoxification of drugs, xenobiotics and endogenous compounds. Catalyzes the glucuronidation of endogenous steroid hormones such as androgens (testosterone and epitestosterone) and estrogens (estradiol and epiestriol). Contributes to bile acid (BA) detoxification by catalyzing the glucuronidation of BA substrates, which are natural detergents for dietary lipids absorption. Shows a high affinity to aliphatic odorants such as citronellol as well as olfactory tissue specificity, and therefore may be involved in olfaction. Shows a potential role in detoxification of toxic waste compounds in the amniotic fluid before birth, and air-born chemical after birth. This is UDP-glucuronosyltransferase 2A1 from Homo sapiens (Human).